A 447-amino-acid polypeptide reads, in one-letter code: Probable glycine dehydrogenase (decarboxylating) subunit 1 (447 aa).

Belongs to the GcvP family. N-terminal subunit subfamily. As to quaternary structure, the glycine cleavage system is composed of four proteins: P, T, L and H. In this organism, the P 'protein' is a heterodimer of two subunits.

It catalyses the reaction N(6)-[(R)-lipoyl]-L-lysyl-[glycine-cleavage complex H protein] + glycine + H(+) = N(6)-[(R)-S(8)-aminomethyldihydrolipoyl]-L-lysyl-[glycine-cleavage complex H protein] + CO2. The glycine cleavage system catalyzes the degradation of glycine. The P protein binds the alpha-amino group of glycine through its pyridoxal phosphate cofactor; CO(2) is released and the remaining methylamine moiety is then transferred to the lipoamide cofactor of the H protein. This Halalkalibacterium halodurans (strain ATCC BAA-125 / DSM 18197 / FERM 7344 / JCM 9153 / C-125) (Bacillus halodurans) protein is Probable glycine dehydrogenase (decarboxylating) subunit 1.